Here is a 526-residue protein sequence, read N- to C-terminus: ATP synthase subunit alpha (526 aa).

171 to 178 contacts ATP; that stretch reads GDRQTGKT.

It belongs to the ATPase alpha/beta chains family. F-type ATPases have 2 components, CF(1) - the catalytic core - and CF(0) - the membrane proton channel. CF(1) has five subunits: alpha(3), beta(3), gamma(1), delta(1), epsilon(1). CF(0) has four main subunits: a(1), b(1), b'(1) and c(9-12).

It is found in the cell inner membrane. It carries out the reaction ATP + H2O + 4 H(+)(in) = ADP + phosphate + 5 H(+)(out). Functionally, produces ATP from ADP in the presence of a proton gradient across the membrane. The alpha chain is a regulatory subunit. In Chlorobium phaeovibrioides (strain DSM 265 / 1930) (Prosthecochloris vibrioformis (strain DSM 265)), this protein is ATP synthase subunit alpha.